The primary structure comprises 415 residues: Lysosome-associated membrane glycoprotein 2 (415 aa).

A signal peptide spans 1–25 (MCLSPVKGAKLILIFLFLGAVQSNA). Residues 26 to 188 (LIVNLTDSKG…SKNEQVCEED (163 aa)) are first lumenal domain. At 26–379 (LIVNLTDSKG…AQDCSADEDN (354 aa)) the chain is on the lumenal side. Asparagine 29, asparagine 45, asparagine 54, asparagine 57, asparagine 97, asparagine 115, and asparagine 175 each carry an N-linked (GlcNAc...) asparagine glycan. A disulfide bond links cysteine 37 and cysteine 75. Cysteine 149 and cysteine 185 are oxidised to a cystine. The interval 189–233 (QTPTTVAPIIHTTAPSTTTTLTPTSTPTPTPTPTPTVGNYSIRNG) is hinge. Low complexity predominate over residues 202-213 (APSTTTTLTPTS). The tract at residues 202 to 227 (APSTTTTLTPTSTPTPTPTPTPTVGN) is disordered. N-linked (GlcNAc...) asparagine glycans are attached at residues asparagine 227, asparagine 234, asparagine 247, asparagine 265, asparagine 280, asparagine 312, asparagine 317, asparagine 322, and asparagine 361. The second lumenal domain stretch occupies residues 234-379 (NTTCLLATMG…AQDCSADEDN (146 aa)). Residues cysteine 237 and cysteine 270 are joined by a disulfide bond. A disulfide bridge connects residues cysteine 336 and cysteine 373. A helical membrane pass occupies residues 380-404 (FLVPIAVGAALGGVLILVLLAYFIG). Residues 405–415 (LKRHHTGYEQF) lie on the Cytoplasmic side of the membrane. The tract at residues 406–409 (KRHH) is important for binding and subsequent lysosomal degradation of target proteins.

It belongs to the LAMP family. Monomer. Forms large homooligomers. Interacts (via its cytoplasmic region) with HSPA8; HSPA8 mediates recruitment of proteins with a KFERQ motif to the surface of the lysosome for chaperone-mediated autophagy. Interacts with HSP90 in the lysosome lumen; this enhances LAMP2 stability. Interacts with MLLT11. Interacts with ABCB9. Interacts with FURIN. Interacts with CT55; this interaction may be important for LAMP2 protein stability. Interacts with TMEM175; inhibiting the proton channel activity of TMEM175. Forms a ternary complex with RAB7A and RUFY4 (via RUN domain); the interaction with RAB7A is mediated by RUFY4 (via RUN and coiled coil domains). In terms of processing, extensively N-glycosylated. Contains a minor proportion of O-linked glycans. In terms of tissue distribution, detected in liver and kidney (at protein level). Detected in liver and kidney.

It localises to the lysosome membrane. The protein localises to the endosome membrane. It is found in the cytoplasmic vesicle. The protein resides in the autophagosome membrane. Its subcellular location is the cell membrane. In terms of biological role, lysosomal membrane glycoprotein which plays an important role in lysosome biogenesis, lysosomal pH regulation and autophagy. Acts as an important regulator of lysosomal lumen pH regulation by acting as a direct inhibitor of the proton channel TMEM175, facilitating lysosomal acidification for optimal hydrolase activity. Plays an important role in chaperone-mediated autophagy, a process that mediates lysosomal degradation of proteins in response to various stresses and as part of the normal turnover of proteins with a long biological half-live. Functions by binding target proteins, such as GAPDH, NLRP3 and MLLT11, and targeting them for lysosomal degradation. In the chaperone-mediated autophagy, acts downstream of chaperones, such as HSPA8/HSC70, which recognize and bind substrate proteins and mediate their recruitment to lysosomes, where target proteins bind LAMP2. Plays a role in lysosomal protein degradation in response to starvation. Required for the fusion of autophagosomes with lysosomes during autophagy. Cells that lack LAMP2 express normal levels of VAMP8, but fail to accumulate STX17 on autophagosomes, which is the most likely explanation for the lack of fusion between autophagosomes and lysosomes. Required for normal degradation of the contents of autophagosomes. Required for efficient MHC class II-mediated presentation of exogenous antigens via its function in lysosomal protein degradation; antigenic peptides generated by proteases in the endosomal/lysosomal compartment are captured by nascent MHC II subunits. Is not required for efficient MHC class II-mediated presentation of endogenous antigens. This Mus musculus (Mouse) protein is Lysosome-associated membrane glycoprotein 2 (Lamp2).